The following is a 61-amino-acid chain: Protein translocase subunit SecE (61 aa).

The chain crosses the membrane as a helical span at residues 39–59; sequence LGIILIGLIGMLIRIMGILVL.

This sequence belongs to the SecE/SEC61-gamma family. As to quaternary structure, component of the Sec protein translocase complex. Heterotrimer consisting of SecY (alpha), SecG (beta) and SecE (gamma) subunits. The heterotrimers can form oligomers, although 1 heterotrimer is thought to be able to translocate proteins. Interacts with the ribosome. May interact with SecDF, and other proteins may be involved.

The protein resides in the cell membrane. In terms of biological role, essential subunit of the Sec protein translocation channel SecYEG. Clamps together the 2 halves of SecY. May contact the channel plug during translocation. The polypeptide is Protein translocase subunit SecE (Pyrococcus abyssi (strain GE5 / Orsay)).